Reading from the N-terminus, the 328-residue chain is Ketol-acid reductoisomerase (NADP(+)) (328 aa).

The 181-residue stretch at 2 to 182 folds into the KARI N-terminal Rossmann domain; sequence AKIYRDVDAS…GATRAGVIET (181 aa). NADP(+) contacts are provided by residues 25 to 28, Arg-48, Ser-53, and 83 to 86; these read YGIQ and DMEQ. His-108 is a catalytic residue. An NADP(+)-binding site is contributed by Gly-134. One can recognise a KARI C-terminal knotted domain in the interval 183 to 328; it reads TFAEETETDL…IEMRRLLFGQ (146 aa). Residues Asp-191, Glu-195, Glu-227, and Glu-231 each contribute to the Mg(2+) site. Substrate is bound at residue Ser-252.

Belongs to the ketol-acid reductoisomerase family. Mg(2+) serves as cofactor.

The catalysed reaction is (2R)-2,3-dihydroxy-3-methylbutanoate + NADP(+) = (2S)-2-acetolactate + NADPH + H(+). The enzyme catalyses (2R,3R)-2,3-dihydroxy-3-methylpentanoate + NADP(+) = (S)-2-ethyl-2-hydroxy-3-oxobutanoate + NADPH + H(+). It participates in amino-acid biosynthesis; L-isoleucine biosynthesis; L-isoleucine from 2-oxobutanoate: step 2/4. Its pathway is amino-acid biosynthesis; L-valine biosynthesis; L-valine from pyruvate: step 2/4. Its function is as follows. Involved in the biosynthesis of branched-chain amino acids (BCAA). Catalyzes an alkyl-migration followed by a ketol-acid reduction of (S)-2-acetolactate (S2AL) to yield (R)-2,3-dihydroxy-isovalerate. In the isomerase reaction, S2AL is rearranged via a Mg-dependent methyl migration to produce 3-hydroxy-3-methyl-2-ketobutyrate (HMKB). In the reductase reaction, this 2-ketoacid undergoes a metal-dependent reduction by NADPH to yield (R)-2,3-dihydroxy-isovalerate. The polypeptide is Ketol-acid reductoisomerase (NADP(+)) (Pyrobaculum arsenaticum (strain DSM 13514 / JCM 11321 / PZ6)).